The sequence spans 337 residues: Ketol-acid reductoisomerase (NADP(+)) (337 aa).

Residues Val-3–Thr-183 form the KARI N-terminal Rossmann domain. Residues Tyr-26 to Gln-29, Lys-49, Ser-52, Ser-54, and Asp-84 to Gln-87 each bind NADP(+). The active site involves His-109. Gly-135 contacts NADP(+). Positions Thr-184–Val-329 constitute a KARI C-terminal knotted domain. Mg(2+)-binding residues include Asp-192, Glu-196, Glu-228, and Glu-232. Substrate is bound at residue Ser-253.

Belongs to the ketol-acid reductoisomerase family. It depends on Mg(2+) as a cofactor.

The catalysed reaction is (2R)-2,3-dihydroxy-3-methylbutanoate + NADP(+) = (2S)-2-acetolactate + NADPH + H(+). It carries out the reaction (2R,3R)-2,3-dihydroxy-3-methylpentanoate + NADP(+) = (S)-2-ethyl-2-hydroxy-3-oxobutanoate + NADPH + H(+). Its pathway is amino-acid biosynthesis; L-isoleucine biosynthesis; L-isoleucine from 2-oxobutanoate: step 2/4. It functions in the pathway amino-acid biosynthesis; L-valine biosynthesis; L-valine from pyruvate: step 2/4. Its function is as follows. Involved in the biosynthesis of branched-chain amino acids (BCAA). Catalyzes an alkyl-migration followed by a ketol-acid reduction of (S)-2-acetolactate (S2AL) to yield (R)-2,3-dihydroxy-isovalerate. In the isomerase reaction, S2AL is rearranged via a Mg-dependent methyl migration to produce 3-hydroxy-3-methyl-2-ketobutyrate (HMKB). In the reductase reaction, this 2-ketoacid undergoes a metal-dependent reduction by NADPH to yield (R)-2,3-dihydroxy-isovalerate. The chain is Ketol-acid reductoisomerase (NADP(+)) from Rhodococcus erythropolis (strain PR4 / NBRC 100887).